The following is a 641-amino-acid chain: Serine/threonine-protein kinase pink-1, mitochondrial (641 aa).

The transit peptide at 1–74 (MSMKRFGKAA…TRHGRVFRPF (74 aa)) directs the protein to the mitochondrion. In terms of domain architecture, Protein kinase spans 137–483 (YEFGEFLGQG…AANALNLSLF (347 aa)). Residues 143–151 (LGQGCNAAV) and K199 each bind ATP. The active-site Proton acceptor is D338.

The protein belongs to the protein kinase superfamily. Ser/Thr protein kinase family. Requires Mg(2+) as cofactor. Post-translationally, autophosphorylated.

It localises to the mitochondrion. It carries out the reaction L-seryl-[protein] + ATP = O-phospho-L-seryl-[protein] + ADP + H(+). It catalyses the reaction L-threonyl-[protein] + ATP = O-phospho-L-threonyl-[protein] + ADP + H(+). Its function is as follows. Protects against mitochondrial dysfunction during cellular stress, potentially by phosphorylating mitochondrial proteins. Plays a role in mitophagy. This Caenorhabditis elegans protein is Serine/threonine-protein kinase pink-1, mitochondrial (pink-1).